A 426-amino-acid chain; its full sequence is Egl nine homolog 1 (426 aa).

Residue Ala2 is modified to N-acetylalanine. Residues Gly6–Tyr20 form a required for nuclear export region. Ser12 is subject to Phosphoserine. Cys21, Cys24, Cys33, Cys36, Cys42, His46, His54, and Cys58 together coordinate Zn(2+). The MYND-type; atypical zinc finger occupies Cys21–Cys58. Disordered regions lie at residues Leu65–Ala129 and Ala160–Gln184. The segment covering Pro77–Arg87 has biased composition (pro residues). Over residues Gly89–Ala103 the composition is skewed to basic and acidic residues. Residues Pro120–Ala129 are compositionally biased toward low complexity. Ser125 is subject to Phosphoserine. Residues Cys201 and Cys208 each carry the S-nitrosocysteine modification. The interval Val241 to Ile251 is beta(2)beta(3) 'finger-like' loop. The 102-residue stretch at Lys291 to Asp392 folds into the Fe2OG dioxygenase domain. At Cys302 the chain carries S-nitrosocysteine. Fe cation is bound by residues His313 and Asp315. S-nitrosocysteine occurs at positions 323 and 326. Residue His374 coordinates Fe cation. A 2-oxoglutarate-binding site is contributed by Arg383.

As to quaternary structure, monomer. Interacts with ING4; the interaction inhibits the hydroxylation of HIF alpha proteins. Interacts with PTGES3 (via PXLE motif); thereby recruiting EGLN1 to the HSP90 pathway to facilitate HIF alpha proteins hydroxylation. Interacts with LIMD1. Found in a complex composed of LIMD1, VHL, EGLN1/PHD2, ELOB and CUL2. Interacts with EPAS1. Interacts with CBFA2T3. Interacts with HIF1A. Fe(2+) serves as cofactor. It depends on L-ascorbate as a cofactor. Post-translationally, S-nitrosylation inhibits the enzyme activity up to 60% under aerobic conditions. Chelation of Fe(2+) has no effect on the S-nitrosylation. It is uncertain whether nitrosylation occurs on Cys-323 or Cys-326. In terms of tissue distribution, according to PubMed:11056053, widely expressed with highest levels in skeletal muscle and heart, moderate levels in pancreas, brain (dopaminergic neurons of adult and fetal substantia nigra) and kidney, and lower levels in lung and liver. According to PubMed:12351678 widely expressed with highest levels in brain, kidney and adrenal gland. Expressed in cardiac myocytes, aortic endothelial cells and coronary artery smooth muscle. According to PubMed:12788921; expressed in adult and fetal heart, brain, liver, lung, skeletal muscle and kidney. Also expressed in placenta. Highest levels in adult heart, brain, lung and liver and fetal brain, heart spleen and skeletal muscle.

It localises to the cytoplasm. Its subcellular location is the nucleus. The enzyme catalyses L-prolyl-[hypoxia-inducible factor alpha subunit] + 2-oxoglutarate + O2 = trans-4-hydroxy-L-prolyl-[hypoxia-inducible factor alpha subunit] + succinate + CO2. Its activity is regulated as follows. Following exposure to hypoxia, activated in HeLa cells but not in cardiovascular cells. In terms of biological role, cellular oxygen sensor that catalyzes, under normoxic conditions, the post-translational formation of 4-hydroxyproline in hypoxia-inducible factor (HIF) alpha proteins. Hydroxylates a specific proline found in each of the oxygen-dependent degradation (ODD) domains (N-terminal, NODD, and C-terminal, CODD) of HIF1A. Also hydroxylates HIF2A. Has a preference for the CODD site for both HIF1A and HIF1B. Hydroxylated HIFs are then targeted for proteasomal degradation via the von Hippel-Lindau ubiquitination complex. Under hypoxic conditions, the hydroxylation reaction is attenuated allowing HIFs to escape degradation resulting in their translocation to the nucleus, heterodimerization with HIF1B, and increased expression of hypoxy-inducible genes. EGLN1 is the most important isozyme under normoxia and, through regulating the stability of HIF1, involved in various hypoxia-influenced processes such as angiogenesis in retinal and cardiac functionality. Target proteins are preferentially recognized via a LXXLAP motif. The protein is Egl nine homolog 1 of Homo sapiens (Human).